Reading from the N-terminus, the 220-residue chain is MRLILLGAPGAGKGTQANFIKEKFGIPQISTGDMLRAAVKAGSPLGVEAKGYMDAGKLVPDALIIGLVKERLKESDCANGYLFDGFPRTIAQADAMKEAGVAIDYVLEIDVPFSEIVERMSGRRTHAASGRTYHVKFNPPKVEGQDDVTGEPLIQRDDDKEETVKKRLEVYEAQTKPLITYYGDWAQRGEENGLKAPQYRKISGLGSVEEIRERAFEALK.

10–15 (GAGKGT) contributes to the ATP binding site. The interval 30–59 (STGDMLRAAVKAGSPLGVEAKGYMDAGKLV) is NMP. AMP-binding positions include Thr31, Arg36, 57–59 (KLV), 85–88 (GFPR), and Gln92. The interval 122–159 (GRRTHAASGRTYHVKFNPPKVEGQDDVTGEPLIQRDDD) is LID. ATP-binding positions include Arg123 and 132–133 (TY). Residues Arg156 and Arg167 each coordinate AMP. Gly206 lines the ATP pocket.

This sequence belongs to the adenylate kinase family. In terms of assembly, monomer.

Its subcellular location is the cytoplasm. The enzyme catalyses AMP + ATP = 2 ADP. Its pathway is purine metabolism; AMP biosynthesis via salvage pathway; AMP from ADP: step 1/1. In terms of biological role, catalyzes the reversible transfer of the terminal phosphate group between ATP and AMP. Plays an important role in cellular energy homeostasis and in adenine nucleotide metabolism. The polypeptide is Adenylate kinase (Burkholderia vietnamiensis (strain G4 / LMG 22486) (Burkholderia cepacia (strain R1808))).